Reading from the N-terminus, the 613-residue chain is Dihydroxy-acid dehydratase (613 aa).

Position 81 (D81) interacts with Mg(2+). C122 is a binding site for [2Fe-2S] cluster. Residues D123 and K124 each coordinate Mg(2+). Position 124 is an N6-carboxylysine (K124). C195 serves as a coordination point for [2Fe-2S] cluster. Residue E491 coordinates Mg(2+). S517 acts as the Proton acceptor in catalysis.

This sequence belongs to the IlvD/Edd family. As to quaternary structure, homodimer. [2Fe-2S] cluster serves as cofactor. It depends on Mg(2+) as a cofactor.

It carries out the reaction (2R)-2,3-dihydroxy-3-methylbutanoate = 3-methyl-2-oxobutanoate + H2O. It catalyses the reaction (2R,3R)-2,3-dihydroxy-3-methylpentanoate = (S)-3-methyl-2-oxopentanoate + H2O. Its pathway is amino-acid biosynthesis; L-isoleucine biosynthesis; L-isoleucine from 2-oxobutanoate: step 3/4. It participates in amino-acid biosynthesis; L-valine biosynthesis; L-valine from pyruvate: step 3/4. Functionally, functions in the biosynthesis of branched-chain amino acids. Catalyzes the dehydration of (2R,3R)-2,3-dihydroxy-3-methylpentanoate (2,3-dihydroxy-3-methylvalerate) into 2-oxo-3-methylpentanoate (2-oxo-3-methylvalerate) and of (2R)-2,3-dihydroxy-3-methylbutanoate (2,3-dihydroxyisovalerate) into 2-oxo-3-methylbutanoate (2-oxoisovalerate), the penultimate precursor to L-isoleucine and L-valine, respectively. The polypeptide is Dihydroxy-acid dehydratase (Vibrio parahaemolyticus serotype O3:K6 (strain RIMD 2210633)).